Reading from the N-terminus, the 237-residue chain is MRKQFLIAHRGYSTIAPENTHLAFAAAQLFGFDGLWMEVQLTKDKQIVVTNLDNYKVGNKTHKLSDINLVNLKKINLAKQFKVNVQEQTILTLKEVLMEFLTPFRFLLLFIKGEEEQQNQVLVEQLAQLLEGFELAKEKLILLSSHFSTIKYLNEKLKSFKTSFVFNSKKQLVHLTKDEITQNCRFLAPNDSFYHKNCAELQSYGLPIILWVIKGLLRYQFYENDRFVKFQIAAQLY.

The GP-PDE domain maps to 4 to 237 (QFLIAHRGYS…VKFQIAAQLY (234 aa)).

The protein to glycerophosphoryl diester phosphodiesterases (EC 3.1.4.46). It to M.genitalium MG293.

This is an uncharacterized protein from Mycoplasma pneumoniae (strain ATCC 29342 / M129 / Subtype 1) (Mycoplasmoides pneumoniae).